A 420-amino-acid chain; its full sequence is Ribosome biogenesis protein WDR12 homolog (420 aa).

A ubiquitin-like (UBL) domain region spans residues 10-92 (VQVHLKTKQE…EDAIEIEYVE (83 aa)). WD repeat units lie at residues 104 to 142 (LHDD…LTIS), 143 to 185 (GHTA…NSVE), 192 to 231 (GHER…AVEG), 250 to 288 (GHRE…IKTE), 290 to 329 (STNK…GSVV), 335 to 375 (GHNA…APLY), and 379 to 417 (GHGE…ADDA).

Belongs to the WD repeat WDR12/YTM1 family.

Its subcellular location is the nucleus. It is found in the nucleolus. The protein resides in the nucleoplasm. Functionally, required for maturation of ribosomal RNAs and formation of the large ribosomal subunit. This is Ribosome biogenesis protein WDR12 homolog from Drosophila yakuba (Fruit fly).